The sequence spans 270 residues: HTH-type transcriptional activator AllS (270 aa).

The HTH lysR-type domain occupies 4-61 (LDPETLRTFVSVAETGSFSRAAEKLYKTTATISYRIKLLEDNTGVALFSRTTRSVLLT). The H-T-H motif DNA-binding region spans 21–40 (FSRAAEKLYKTTATISYRIK).

This sequence belongs to the LysR transcriptional regulatory family.

Positive regulator essential for the expression of allD operon. Binds to the allD promoter. The protein is HTH-type transcriptional activator AllS (allS) of Klebsiella pneumoniae.